Here is a 163-residue protein sequence, read N- to C-terminus: Probable chemoreceptor glutamine deamidase CheD (163 aa).

It belongs to the CheD family.

The enzyme catalyses L-glutaminyl-[protein] + H2O = L-glutamyl-[protein] + NH4(+). Probably deamidates glutamine residues to glutamate on methyl-accepting chemotaxis receptors (MCPs), playing an important role in chemotaxis. This is Probable chemoreceptor glutamine deamidase CheD from Borrelia garinii subsp. bavariensis (strain ATCC BAA-2496 / DSM 23469 / PBi) (Borreliella bavariensis).